The sequence spans 509 residues: Maturase K (509 aa).

The protein belongs to the intron maturase 2 family. MatK subfamily.

The protein localises to the plastid. It is found in the chloroplast. In terms of biological role, usually encoded in the trnK tRNA gene intron. Probably assists in splicing its own and other chloroplast group II introns. This chain is Maturase K, found in Portulaca oleracea (Common purslane).